A 329-amino-acid chain; its full sequence is Tetraacyldisaccharide 4'-kinase (329 aa).

57-64 (TAGGSGKT) is an ATP binding site.

Belongs to the LpxK family.

It carries out the reaction a lipid A disaccharide + ATP = a lipid IVA + ADP + H(+). Its pathway is glycolipid biosynthesis; lipid IV(A) biosynthesis; lipid IV(A) from (3R)-3-hydroxytetradecanoyl-[acyl-carrier-protein] and UDP-N-acetyl-alpha-D-glucosamine: step 6/6. Transfers the gamma-phosphate of ATP to the 4'-position of a tetraacyldisaccharide 1-phosphate intermediate (termed DS-1-P) to form tetraacyldisaccharide 1,4'-bis-phosphate (lipid IVA). This Thiobacillus denitrificans (strain ATCC 25259 / T1) protein is Tetraacyldisaccharide 4'-kinase.